The following is a 114-amino-acid chain: Phosphoribosyl-AMP cyclohydrolase (114 aa).

Mg(2+) is bound at residue aspartate 80. Cysteine 81 contributes to the Zn(2+) binding site. Aspartate 82 and aspartate 84 together coordinate Mg(2+). Zn(2+)-binding residues include cysteine 97 and cysteine 104.

Belongs to the PRA-CH family. In terms of assembly, homodimer. It depends on Mg(2+) as a cofactor. Zn(2+) is required as a cofactor.

It localises to the cytoplasm. The enzyme catalyses 1-(5-phospho-beta-D-ribosyl)-5'-AMP + H2O = 1-(5-phospho-beta-D-ribosyl)-5-[(5-phospho-beta-D-ribosylamino)methylideneamino]imidazole-4-carboxamide. Its pathway is amino-acid biosynthesis; L-histidine biosynthesis; L-histidine from 5-phospho-alpha-D-ribose 1-diphosphate: step 3/9. Its function is as follows. Catalyzes the hydrolysis of the adenine ring of phosphoribosyl-AMP. The polypeptide is Phosphoribosyl-AMP cyclohydrolase (Rhodococcus jostii (strain RHA1)).